The sequence spans 61 residues: Ferredoxin (61 aa).

The 27-residue stretch at Leu-2–Glu-28 folds into the 4Fe-4S ferredoxin-type domain. Cys-8, Cys-11, Cys-14, Cys-18, Cys-37, Cys-40, Cys-49, and Cys-53 together coordinate [4Fe-4S] cluster.

Requires [4Fe-4S] cluster as cofactor.

In terms of biological role, ferredoxins are iron-sulfur proteins that transfer electrons in a wide variety of metabolic reactions. The polypeptide is Ferredoxin (Chlorobaculum thiosulfatiphilum (Chlorobium limicola f.sp. thiosulfatophilum)).